A 152-amino-acid chain; its full sequence is Allergen Asp f 15 (152 aa).

The signal sequence occupies residues 1–19 (MKFTTPISLISLFVSSALA). Cystine bridges form between Cys-53/Cys-90 and Cys-93/Cys-148.

The protein belongs to the cerato-platanin family.

Its subcellular location is the secreted. In Aspergillus fumigatus (strain ATCC MYA-4609 / CBS 101355 / FGSC A1100 / Af293) (Neosartorya fumigata), this protein is Allergen Asp f 15.